We begin with the raw amino-acid sequence, 178 residues long: Translation initiation factor IF-3 (178 aa).

A disordered region spans residues 1-20 (MRRPFKAAAPTKDGPRSNRD).

The protein belongs to the IF-3 family. Monomer.

The protein resides in the cytoplasm. In terms of biological role, IF-3 binds to the 30S ribosomal subunit and shifts the equilibrium between 70S ribosomes and their 50S and 30S subunits in favor of the free subunits, thus enhancing the availability of 30S subunits on which protein synthesis initiation begins. The sequence is that of Translation initiation factor IF-3 from Mesorhizobium japonicum (strain LMG 29417 / CECT 9101 / MAFF 303099) (Mesorhizobium loti (strain MAFF 303099)).